An 810-amino-acid chain; its full sequence is Plasminogen (810 aa).

Residues 1–19 (MEHKEVVLLLLLFLKSGQG) form the signal peptide. In terms of domain architecture, PAN spans 20 to 98 (EPLDDYVNTK…RDVVLFEKKV (79 aa)). 12 disulfides stabilise this stretch: C49-C73, C53-C61, C103-C181, C124-C164, C152-C176, C185-C262, C188-C316, C206-C245, C234-C257, C275-C352, C296-C335, and C324-C347. Kringle domains follow at residues 103 to 181 (CKTG…IPEC), 184 to 262 (ECMH…IPRC), and 275 to 352 (CLKG…IPSC). Residues 125-141 (QKWSSTSPHRPTFSPAT) show a composition bias toward polar residues. Residues 125-145 (QKWSSTSPHRPTFSPATHPSE) form a disordered region. Residues T136, D158, and R172 each contribute to the L-lysine site. O-linked (GalNAc...) threonine glycosylation occurs at T365. Intrachain disulfides connect C377-C454, C398-C437, C426-C449, C481-C560, C502-C543, C531-C555, C567-C685, C577-C585, and C607-C623. 2 consecutive Kringle domains span residues 377–454 (CYHG…LKKC) and 481–560 (CMFG…VPQC). The L-lysine site is built by D432 and R445. Positions 581 to 808 (VVGGCVAYPH…FVTWIEGVMR (228 aa)) constitute a Peptidase S1 domain. S597 is modified (phosphoserine). Catalysis depends on charge relay system residues H622 and D665. Residue S688 is modified to Phosphoserine. 3 cysteine pairs are disulfide-bonded: C699/C766, C729/C745, and C756/C784. S760 functions as the Charge relay system in the catalytic mechanism.

This sequence belongs to the peptidase S1 family. Plasminogen subfamily. As to quaternary structure, interacts with CSPG4 and AMOT. Interacts (via the Kringle domains) with HRG; the interaction tethers PLG to the cell surface and enhances its activation. Interacts (via Kringle 4 domain) with ADA; the interaction stimulates PLG activation when in complex with DPP4. Angiostatin: Interacts with ATP5F1A; the interaction inhibits most of the angiogenic effects of angiostatin. Post-translationally, in the presence of the inhibitor, the activation involves only cleavage after Arg-580, yielding two chains held together by two disulfide bonds. In the absence of the inhibitor, the activation involves additionally the removal of the activation peptide.

Its subcellular location is the secreted. The catalysed reaction is Preferential cleavage: Lys-|-Xaa &gt; Arg-|-Xaa, higher selectivity than trypsin. Converts fibrin into soluble products.. Converted into plasmin by plasminogen activators, both plasminogen and its activator being bound to fibrin. Activated with catalytic amounts of streptokinase. Plasmin dissolves the fibrin of blood clots and acts as a proteolytic factor in a variety of other processes including embryonic development, tissue remodeling, tumor invasion, and inflammation. In ovulation, weakens the walls of the Graafian follicle. It activates the urokinase-type plasminogen activator, collagenases and several complement zymogens, such as C1, C4 and C5. Cleavage of fibronectin and laminin leads to cell detachment and apoptosis. Also cleaves fibrin, thrombospondin and von Willebrand factor. Its role in tissue remodeling and tumor invasion may be modulated by CSPG4. Binds to cells. The chain is Plasminogen (PLG) from Macaca mulatta (Rhesus macaque).